A 341-amino-acid polypeptide reads, in one-letter code: Phosphoribosylformylglycinamidine cyclo-ligase (341 aa).

Belongs to the AIR synthase family.

The protein localises to the cytoplasm. It catalyses the reaction 2-formamido-N(1)-(5-O-phospho-beta-D-ribosyl)acetamidine + ATP = 5-amino-1-(5-phospho-beta-D-ribosyl)imidazole + ADP + phosphate + H(+). It functions in the pathway purine metabolism; IMP biosynthesis via de novo pathway; 5-amino-1-(5-phospho-D-ribosyl)imidazole from N(2)-formyl-N(1)-(5-phospho-D-ribosyl)glycinamide: step 2/2. This is Phosphoribosylformylglycinamidine cyclo-ligase from Thermosynechococcus vestitus (strain NIES-2133 / IAM M-273 / BP-1).